Here is a 337-residue protein sequence, read N- to C-terminus: Probable poly [ADP-ribose] polymerase DDB_G0278045 (337 aa).

Residues 21 to 231 (KKWDIIYKQR…NNNKNKNKNN (211 aa)) form the PARP catalytic domain. The span at 218-242 (NNTNNNNKNKNKNNNKNNNKNIKIQ) shows a compositional bias: low complexity. The interval 218–247 (NNTNNNNKNKNKNNNKNNNKNIKIQNENKN) is disordered.

It catalyses the reaction L-aspartyl-[protein] + NAD(+) = 4-O-(ADP-D-ribosyl)-L-aspartyl-[protein] + nicotinamide. It carries out the reaction L-glutamyl-[protein] + NAD(+) = 5-O-(ADP-D-ribosyl)-L-glutamyl-[protein] + nicotinamide. The enzyme catalyses NAD(+) + (ADP-D-ribosyl)n-acceptor = nicotinamide + (ADP-D-ribosyl)n+1-acceptor + H(+).. This chain is Probable poly [ADP-ribose] polymerase DDB_G0278045, found in Dictyostelium discoideum (Social amoeba).